The sequence spans 296 residues: NAD kinase (296 aa).

Asp-72 acts as the Proton acceptor in catalysis. NAD(+) is bound by residues 72 to 73 (DG), 146 to 147 (ND), Arg-157, Lys-174, Asp-176, 187 to 192 (TAYALS), and Gln-247.

This sequence belongs to the NAD kinase family. A divalent metal cation is required as a cofactor.

It is found in the cytoplasm. It catalyses the reaction NAD(+) + ATP = ADP + NADP(+) + H(+). Its function is as follows. Involved in the regulation of the intracellular balance of NAD and NADP, and is a key enzyme in the biosynthesis of NADP. Catalyzes specifically the phosphorylation on 2'-hydroxyl of the adenosine moiety of NAD to yield NADP. This chain is NAD kinase, found in Pseudomonas putida (strain W619).